Consider the following 363-residue polypeptide: UDP-N-acetylglucosamine--N-acetylmuramyl-(pentapeptide) pyrophosphoryl-undecaprenol N-acetylglucosamine transferase (363 aa).

UDP-N-acetyl-alpha-D-glucosamine-binding positions include 14 to 16, Arg-171, Ser-200, and Gln-290; that span reads TGG.

The protein belongs to the glycosyltransferase 28 family. MurG subfamily.

It is found in the cell inner membrane. It carries out the reaction di-trans,octa-cis-undecaprenyl diphospho-N-acetyl-alpha-D-muramoyl-L-alanyl-D-glutamyl-meso-2,6-diaminopimeloyl-D-alanyl-D-alanine + UDP-N-acetyl-alpha-D-glucosamine = di-trans,octa-cis-undecaprenyl diphospho-[N-acetyl-alpha-D-glucosaminyl-(1-&gt;4)]-N-acetyl-alpha-D-muramoyl-L-alanyl-D-glutamyl-meso-2,6-diaminopimeloyl-D-alanyl-D-alanine + UDP + H(+). It functions in the pathway cell wall biogenesis; peptidoglycan biosynthesis. Cell wall formation. Catalyzes the transfer of a GlcNAc subunit on undecaprenyl-pyrophosphoryl-MurNAc-pentapeptide (lipid intermediate I) to form undecaprenyl-pyrophosphoryl-MurNAc-(pentapeptide)GlcNAc (lipid intermediate II). This is UDP-N-acetylglucosamine--N-acetylmuramyl-(pentapeptide) pyrophosphoryl-undecaprenol N-acetylglucosamine transferase from Borreliella burgdorferi (strain ATCC 35210 / DSM 4680 / CIP 102532 / B31) (Borrelia burgdorferi).